Here is a 1171-residue protein sequence, read N- to C-terminus: ATP-dependent helicase/deoxyribonuclease subunit B (1171 aa).

One can recognise a UvrD-like helicase ATP-binding domain in the interval 1–343 (MSLRFVIGRA…LVADENYRYR (343 aa)). 8 to 15 (GRAGSGKS) is an ATP binding site. The UvrD-like helicase C-terminal domain maps to 281–587 (MEQPRFHSPA…QFANIPPSLD (307 aa)). [4Fe-4S] cluster-binding residues include C805, C1129, C1132, and C1138.

Belongs to the helicase family. AddB/RexB type 1 subfamily. As to quaternary structure, heterodimer of AddA and AddB. The cofactor is Mg(2+). [4Fe-4S] cluster serves as cofactor.

The heterodimer acts as both an ATP-dependent DNA helicase and an ATP-dependent, dual-direction single-stranded exonuclease. Recognizes the chi site generating a DNA molecule suitable for the initiation of homologous recombination. The AddB subunit has 5' -&gt; 3' nuclease activity but not helicase activity. The sequence is that of ATP-dependent helicase/deoxyribonuclease subunit B from Bacillus cereus (strain AH187).